Consider the following 333-residue polypeptide: MKQTVYTASPESQQIHVWRLEPQGTLTLLQVVDAPGQVQPMVISPDKRFLYVGVRPEFRVIAYRIAAHDGTLSEAGEAPLPGSPTHISTDHTGRFLFSGSYNAGSVSVVRLNDGLPGETVTVVEGLEGCHSANISPDNRTLWVPALKQDRICLFTLTDDGHLEPQTPAEVTTVAGAGPRHMVFHPSKPFAYCVNELNSSVDVWALSDPHGNIECVQTLDMMPADFSDTRWAADIHITPDGRHLYACDRTASVITVFTVSEDGSVLAVQGHQPTETQPRGFNIDNSGQYLIAAGQKSHHIAVYGIEGEQGLLAEKGRYAVGQGPMWVVINAFDA.

The protein belongs to the cycloisomerase 2 family.

It carries out the reaction 6-phospho-D-glucono-1,5-lactone + H2O = 6-phospho-D-gluconate + H(+). Its pathway is carbohydrate degradation; pentose phosphate pathway; D-ribulose 5-phosphate from D-glucose 6-phosphate (oxidative stage): step 2/3. Its function is as follows. Catalyzes the hydrolysis of 6-phosphogluconolactone to 6-phosphogluconate. The chain is 6-phosphogluconolactonase from Cronobacter sakazakii (strain ATCC BAA-894) (Enterobacter sakazakii).